We begin with the raw amino-acid sequence, 246 residues long: 5-oxoprolinase subunit A (246 aa).

The protein belongs to the LamB/PxpA family. In terms of assembly, forms a complex composed of PxpA, PxpB and PxpC.

It catalyses the reaction 5-oxo-L-proline + ATP + 2 H2O = L-glutamate + ADP + phosphate + H(+). Catalyzes the cleavage of 5-oxoproline to form L-glutamate coupled to the hydrolysis of ATP to ADP and inorganic phosphate. This is 5-oxoprolinase subunit A from Cupriavidus necator (strain ATCC 17699 / DSM 428 / KCTC 22496 / NCIMB 10442 / H16 / Stanier 337) (Ralstonia eutropha).